A 225-amino-acid polypeptide reads, in one-letter code: Holliday junction branch migration complex subunit RuvA (225 aa).

The tract at residues 1–71 is domain I; sequence MISWINGDLV…EDSDLLFGFT (71 aa). Residues 72–150 are domain II; sequence SNEQKNFFIE…SEILSEEEKS (79 aa). Positions 151-161 are flexible linker; sequence KGELEIKDPEI. The interval 161 to 225 is domain III; it reads INKMIEDLQL…LDEDSSNIAR (65 aa).

This sequence belongs to the RuvA family. In terms of assembly, homotetramer. Forms an RuvA(8)-RuvB(12)-Holliday junction (HJ) complex. HJ DNA is sandwiched between 2 RuvA tetramers; dsDNA enters through RuvA and exits via RuvB. An RuvB hexamer assembles on each DNA strand where it exits the tetramer. Each RuvB hexamer is contacted by two RuvA subunits (via domain III) on 2 adjacent RuvB subunits; this complex drives branch migration. In the full resolvosome a probable DNA-RuvA(4)-RuvB(12)-RuvC(2) complex forms which resolves the HJ.

It localises to the cytoplasm. Functionally, the RuvA-RuvB-RuvC complex processes Holliday junction (HJ) DNA during genetic recombination and DNA repair, while the RuvA-RuvB complex plays an important role in the rescue of blocked DNA replication forks via replication fork reversal (RFR). RuvA specifically binds to HJ cruciform DNA, conferring on it an open structure. The RuvB hexamer acts as an ATP-dependent pump, pulling dsDNA into and through the RuvAB complex. HJ branch migration allows RuvC to scan DNA until it finds its consensus sequence, where it cleaves and resolves the cruciform DNA. The chain is Holliday junction branch migration complex subunit RuvA from Prochlorococcus marinus (strain MIT 9301).